Reading from the N-terminus, the 165-residue chain is Large ribosomal subunit protein uL10 (165 aa).

It belongs to the universal ribosomal protein uL10 family. As to quaternary structure, part of the ribosomal stalk of the 50S ribosomal subunit. The N-terminus interacts with L11 and the large rRNA to form the base of the stalk. The C-terminus forms an elongated spine to which L12 dimers bind in a sequential fashion forming a multimeric L10(L12)X complex.

Its function is as follows. Forms part of the ribosomal stalk, playing a central role in the interaction of the ribosome with GTP-bound translation factors. In Enterobacter sp. (strain 638), this protein is Large ribosomal subunit protein uL10.